The sequence spans 178 residues: Large ribosomal subunit protein bL17 (178 aa).

The interval 150–178 (PADEPVVAEENAPQSAVKDAVDECEGKAD) is disordered. Residues 168 to 178 (DAVDECEGKAD) are compositionally biased toward basic and acidic residues.

This sequence belongs to the bacterial ribosomal protein bL17 family. As to quaternary structure, part of the 50S ribosomal subunit. Contacts protein L32.

The polypeptide is Large ribosomal subunit protein bL17 (Geobacter metallireducens (strain ATCC 53774 / DSM 7210 / GS-15)).